Consider the following 338-residue polypeptide: Ribosomal RNA large subunit methyltransferase F (338 aa).

The tract at residues 1-21 (MTQKKNKPTQKKKGLHPRNPH) is disordered.

Belongs to the methyltransferase superfamily. METTL16/RlmF family.

The protein resides in the cytoplasm. The enzyme catalyses adenosine(1618) in 23S rRNA + S-adenosyl-L-methionine = N(6)-methyladenosine(1618) in 23S rRNA + S-adenosyl-L-homocysteine + H(+). Specifically methylates the adenine in position 1618 of 23S rRNA. This is Ribosomal RNA large subunit methyltransferase F from Photobacterium profundum (strain SS9).